We begin with the raw amino-acid sequence, 236 residues long: 1-(5-phosphoribosyl)-5-[(5-phosphoribosylamino)methylideneamino] imidazole-4-carboxamide isomerase (236 aa).

The active-site Proton acceptor is D8. D127 (proton donor) is an active-site residue.

Belongs to the HisA/HisF family.

It localises to the cytoplasm. The enzyme catalyses 1-(5-phospho-beta-D-ribosyl)-5-[(5-phospho-beta-D-ribosylamino)methylideneamino]imidazole-4-carboxamide = 5-[(5-phospho-1-deoxy-D-ribulos-1-ylimino)methylamino]-1-(5-phospho-beta-D-ribosyl)imidazole-4-carboxamide. It participates in amino-acid biosynthesis; L-histidine biosynthesis; L-histidine from 5-phospho-alpha-D-ribose 1-diphosphate: step 4/9. In Campylobacter fetus subsp. fetus (strain 82-40), this protein is 1-(5-phosphoribosyl)-5-[(5-phosphoribosylamino)methylideneamino] imidazole-4-carboxamide isomerase.